The sequence spans 162 residues: Ribosome maturation factor RimP (162 aa).

Belongs to the RimP family.

It is found in the cytoplasm. Required for maturation of 30S ribosomal subunits. This Cupriavidus pinatubonensis (strain JMP 134 / LMG 1197) (Cupriavidus necator (strain JMP 134)) protein is Ribosome maturation factor RimP.